The following is a 146-amino-acid chain: Large ribosomal subunit protein uL15 (146 aa).

A compositionally biased stretch (basic and acidic residues) spans 1 to 13 (MKLHELKPAEGSR). The segment at 1–52 (MKLHELKPAEGSRKVRNRVGRGIGSGNGKTAGKGHKGQNARSGGGVRLGFEG) is disordered. Gly residues-rich tracts occupy residues 21 to 31 (RGIGSGNGKTA) and 42 to 52 (SGGGVRLGFEG).

The protein belongs to the universal ribosomal protein uL15 family. As to quaternary structure, part of the 50S ribosomal subunit.

In terms of biological role, binds to the 23S rRNA. In Bacillus cereus (strain B4264), this protein is Large ribosomal subunit protein uL15.